A 145-amino-acid chain; its full sequence is Basic phospholipase A2 KPA2 (145 aa).

An N-terminal signal peptide occupies residues methionine 1 to alanine 19. The propeptide occupies alanine 20 to leucine 27. Cystine bridges form between cysteine 38–cysteine 97, cysteine 52–cysteine 144, cysteine 54–cysteine 70, cysteine 69–cysteine 125, cysteine 76–cysteine 118, cysteine 86–cysteine 111, and cysteine 104–cysteine 116. Ca(2+) contacts are provided by tyrosine 53, glycine 55, and glycine 57. Residue histidine 73 is part of the active site. Residue aspartate 74 participates in Ca(2+) binding. Aspartate 119 is a catalytic residue.

The protein belongs to the phospholipase A2 family. Group I subfamily. D49 sub-subfamily. As to quaternary structure, monomer. Requires Ca(2+) as cofactor. In terms of tissue distribution, expressed by the venom gland.

The protein localises to the secreted. It catalyses the reaction a 1,2-diacyl-sn-glycero-3-phosphocholine + H2O = a 1-acyl-sn-glycero-3-phosphocholine + a fatty acid + H(+). In terms of biological role, snake venom phospholipase A2 (PLA2) that shows anticoagulant and neurotoxic activities. PLA2 catalyzes the calcium-dependent hydrolysis of the 2-acyl groups in 3-sn-phosphoglycerides. This chain is Basic phospholipase A2 KPA2, found in Bungarus caeruleus (Indian krait).